Here is a 569-residue protein sequence, read N- to C-terminus: Proline--tRNA ligase (569 aa).

It belongs to the class-II aminoacyl-tRNA synthetase family. ProS type 1 subfamily. Homodimer.

The protein resides in the cytoplasm. The enzyme catalyses tRNA(Pro) + L-proline + ATP = L-prolyl-tRNA(Pro) + AMP + diphosphate. Its function is as follows. Catalyzes the attachment of proline to tRNA(Pro) in a two-step reaction: proline is first activated by ATP to form Pro-AMP and then transferred to the acceptor end of tRNA(Pro). As ProRS can inadvertently accommodate and process non-cognate amino acids such as alanine and cysteine, to avoid such errors it has two additional distinct editing activities against alanine. One activity is designated as 'pretransfer' editing and involves the tRNA(Pro)-independent hydrolysis of activated Ala-AMP. The other activity is designated 'posttransfer' editing and involves deacylation of mischarged Ala-tRNA(Pro). The misacylated Cys-tRNA(Pro) is not edited by ProRS. This chain is Proline--tRNA ligase, found in Campylobacter jejuni subsp. jejuni serotype O:2 (strain ATCC 700819 / NCTC 11168).